The following is a 410-amino-acid chain: Neuroserpin (410 aa).

Positions 1 to 16 are cleaved as a signal peptide; the sequence is MYFLGLLSLLVLPSKA. N-linked (GlcNAc...) asparagine glycosylation is found at asparagine 157 and asparagine 401.

It belongs to the serpin family. In terms of tissue distribution, detected in embryonic ocular vitreous fluid (at protein level). In the embryo present in retina, brain, cerebellum and spinal cord. In adult, predominantly expressed in the brain.

The protein localises to the secreted. It localises to the cytoplasmic vesicle. The protein resides in the secretory vesicle lumen. Its subcellular location is the perikaryon. Functionally, serine protease inhibitor that inhibits plasminogen activators and plasmin but not thrombin. May be involved in the formation or reorganization of synaptic connections as well as for synaptic plasticity in the adult nervous system. May protect neurons from cell damage by tissue-type plasminogen activator. The protein is Neuroserpin (SERPINI1) of Gallus gallus (Chicken).